Reading from the N-terminus, the 230-residue chain is AA9 family lytic polysaccharide monooxygenase H (230 aa).

An N-terminal signal peptide occupies residues 1–17 (MKTLSAGLLALASAASA). Cu(2+) is bound by residues H18 and H89. C59 and C178 form a disulfide bridge. Positions 164 and 173 each coordinate O2. Y175 contacts Cu(2+).

It belongs to the polysaccharide monooxygenase AA9 family. Requires Cu(2+) as cofactor.

The protein localises to the secreted. It carries out the reaction [(1-&gt;4)-beta-D-glucosyl]n+m + reduced acceptor + O2 = 4-dehydro-beta-D-glucosyl-[(1-&gt;4)-beta-D-glucosyl]n-1 + [(1-&gt;4)-beta-D-glucosyl]m + acceptor + H2O.. Functionally, lytic polysaccharide monooxygenase (LPMO) that depolymerizes crystalline and amorphous polysaccharides via the oxidation of scissile alpha- or beta-(1-4)-glycosidic bonds, yielding primarly C1 oxidation products. Catalysis by LPMOs requires the reduction of the active-site copper from Cu(II) to Cu(I) by a reducing agent and H(2)O(2) or O(2) as a cosubstrate. Active on hemicelluloses, including xylan, glucomannan, and xyloglucan. Preferentially cleaves residual xylan in phosphoric acid-swollen cellulose (PASC). Moreover, when exposed to cellulose-xylan blends, shows a preference for xylan and for releasing oxidized xylooligosaccharides. Has no activity on ivory nut mannan (INM), a linear beta-1,4-linked mannan without substitutions. This chain is AA9 family lytic polysaccharide monooxygenase H, found in Malbranchea cinnamomea (Thermophilic fungus).